Consider the following 480-residue polypeptide: Proline--tRNA ligase (480 aa).

It belongs to the class-II aminoacyl-tRNA synthetase family. ProS type 3 subfamily. In terms of assembly, homodimer.

Its subcellular location is the cytoplasm. It catalyses the reaction tRNA(Pro) + L-proline + ATP = L-prolyl-tRNA(Pro) + AMP + diphosphate. In terms of biological role, catalyzes the attachment of proline to tRNA(Pro) in a two-step reaction: proline is first activated by ATP to form Pro-AMP and then transferred to the acceptor end of tRNA(Pro). The polypeptide is Proline--tRNA ligase (Methanosarcina mazei (strain ATCC BAA-159 / DSM 3647 / Goe1 / Go1 / JCM 11833 / OCM 88) (Methanosarcina frisia)).